The chain runs to 206 residues: Dephospho-CoA kinase (206 aa).

The 201-residue stretch at I4–K204 folds into the DPCK domain. G12–T17 provides a ligand contact to ATP.

Belongs to the CoaE family.

Its subcellular location is the cytoplasm. The catalysed reaction is 3'-dephospho-CoA + ATP = ADP + CoA + H(+). It participates in cofactor biosynthesis; coenzyme A biosynthesis; CoA from (R)-pantothenate: step 5/5. Catalyzes the phosphorylation of the 3'-hydroxyl group of dephosphocoenzyme A to form coenzyme A. This chain is Dephospho-CoA kinase, found in Haemophilus influenzae (strain 86-028NP).